The primary structure comprises 324 residues: MENYQKIEKIGEGTYGVVYKARDLTHPNRIVALKKIRLEAEDEGVPSTAIREISLLKEMHDPNIVRLLNIVHADGHKLYLVFEFLDLDLKKYMEALPVSEGGRGKALPDGSTLDMNRLGLGEAMVKKFMAQLVEGIRYCHSHRVLHRDLKPQNLLIDREGNLKLADFGLARAFGVPLRTYTHEVVTLWYRAPEILLGGRQYSTGVDMWSVGAIFAEMCTRKPLFPGDSEIDEIFKIFKLLGTPDENTWPGVTSFPDFKASFPKWKREDTRKLVPGLERNGLDLLDAMLEYDPARRISAKQACMHPYFQAGSSAYSGRERLQPYP.

The Protein kinase domain maps to Tyr-4–Phe-307. ATP-binding positions include Ile-10–Val-18 and Lys-34. Thr-14 is subject to Phosphothreonine. Tyr-15 bears the Phosphotyrosine mark. The active-site Proton acceptor is the Asp-148. The residue at position 181 (Thr-181) is a Phosphothreonine; by CAK.

This sequence belongs to the protein kinase superfamily. CMGC Ser/Thr protein kinase family. CDC2/CDKX subfamily. Forms a stable but non-covalent complex with a regulatory subunit (SUC1) and with a cyclin.

The catalysed reaction is L-seryl-[protein] + ATP = O-phospho-L-seryl-[protein] + ADP + H(+). It catalyses the reaction L-threonyl-[protein] + ATP = O-phospho-L-threonyl-[protein] + ADP + H(+). Its activity is regulated as follows. Phosphorylation at Thr-14 or Tyr-15 inactivates the enzyme, while phosphorylation at Thr-181 activates it. Cyclin-dependent kinase that acts as a master regulator of the mitotic and meiotic cell cycles. The polypeptide is Cyclin-dependent kinase 1 (Ajellomyces capsulatus (Darling's disease fungus)).